The following is a 71-amino-acid chain: Beta-defensin 131A (71 aa).

A signal peptide spans 1–22; sequence MRVLFFVFGVLSLMFTVPPARS. 3 disulfides stabilise this stretch: Cys29–Cys57, Cys37–Cys51, and Cys41–Cys58.

It belongs to the beta-defensin family.

The protein resides in the secreted. Has antibacterial activity. Upon stimulation with lipoteichoic acid, promotes cytokines and chemokines production and secretion. This is Beta-defensin 131A from Pan troglodytes (Chimpanzee).